The sequence spans 321 residues: Aspartate carbamoyltransferase catalytic subunit (321 aa).

Carbamoyl phosphate contacts are provided by R64 and T65. K92 contacts L-aspartate. Residues R114, H142, and Q145 each contribute to the carbamoyl phosphate site. Positions 175 and 229 each coordinate L-aspartate. Positions 270 and 271 each coordinate carbamoyl phosphate.

This sequence belongs to the aspartate/ornithine carbamoyltransferase superfamily. ATCase family. As to quaternary structure, heterododecamer (2C3:3R2) of six catalytic PyrB chains organized as two trimers (C3), and six regulatory PyrI chains organized as three dimers (R2).

The enzyme catalyses carbamoyl phosphate + L-aspartate = N-carbamoyl-L-aspartate + phosphate + H(+). The protein operates within pyrimidine metabolism; UMP biosynthesis via de novo pathway; (S)-dihydroorotate from bicarbonate: step 2/3. In terms of biological role, catalyzes the condensation of carbamoyl phosphate and aspartate to form carbamoyl aspartate and inorganic phosphate, the committed step in the de novo pyrimidine nucleotide biosynthesis pathway. This chain is Aspartate carbamoyltransferase catalytic subunit, found in Azorhizobium caulinodans (strain ATCC 43989 / DSM 5975 / JCM 20966 / LMG 6465 / NBRC 14845 / NCIMB 13405 / ORS 571).